Here is a 308-residue protein sequence, read N- to C-terminus: Palmitoyltransferase ZDHHC7 (308 aa).

Residues 1 to 50 are Cytoplasmic-facing; sequence MQPSGHRLRDIEHHPLLTDNDNYDSASSSSSEADMADRVWFIRDGCGMVC. A helical membrane pass occupies residues 51–71; it reads AVMTWLLVVYADFVVTFVMLL. Residues 72–75 are Lumenal-facing; that stretch reads PSKD. A helical membrane pass occupies residues 76-96; that stretch reads FWYSVVNGVLFNCLAVLALSS. The Cytoplasmic segment spans residues 97-173; that stretch reads HLRTMLTDPG…NNCVGEKNQR (77 aa). The 51-residue stretch at 130–180 folds into the DHHC domain; sequence YKCPKCCCIKPERAHHCSICKRCIRKMDHHCPWVNNCVGEKNQRFFVLFTM. Catalysis depends on Cys160, which acts as the S-palmitoyl cysteine intermediate. Residues 174 to 194 form a helical membrane-spanning segment; the sequence is FFVLFTMYIALSSIHALILCG. At 195 to 217 the chain is on the lumenal side; the sequence is LQFISCVRGQWTECSDFSPPITV. Residues 218-238 form a helical membrane-spanning segment; it reads ILLVFLCLEGLLFFTFTAVMF. Residues 239-308 are Cytoplasmic-facing; sequence GTQIHSICND…TRKGGPEFSV (70 aa).

Belongs to the DHHC palmitoyltransferase family. In terms of assembly, homooligomers. Heterooligomers with ZDHHC3. Post-translationally, autopalmitoylated. As to expression, widely expressed. Present in Sertoli cells (at protein level).

It is found in the golgi apparatus membrane. It carries out the reaction L-cysteinyl-[protein] + hexadecanoyl-CoA = S-hexadecanoyl-L-cysteinyl-[protein] + CoA. The enzyme catalyses L-cysteinyl-[protein] + tetradecanoyl-CoA = S-tetradecanoyl-L-cysteinyl-[protein] + CoA. It catalyses the reaction L-cysteinyl-[protein] + octadecanoyl-CoA = S-octadecanoyl-L-cysteinyl-[protein] + CoA. Golgi-localized palmitoyltransferase that catalyzes the addition of palmitate onto various protein substrates and therefore functions in several unrelated biological processes. Has no stringent fatty acid selectivity and in addition to palmitate can also transfer onto target proteins myristate from tetradecanoyl-CoA and stearate from octadecanoyl-CoA. Palmitoylates sex steroid hormone receptors, including ESR1, PGR and AR, thereby regulating their targeting to the plasma membrane and their function in rapid intracellular signaling upon binding of sex hormones. Palmitoylates GNAQ, a heterotrimeric G protein, regulating its dynamic localization at the plasma membrane and is thereby involved in GNAQ-dependent G protein-coupled receptor signaling pathways. Also functions in ligand-induced cell death by regulating the FAS signaling pathway through the palmitoylation and stabilization of the receptor at the plasma membrane. In epithelial cells, palmitoylates SCRIB and regulates its localization to the plasma membrane, regulating indirectly cell polarity and differentiation. Also palmitoylates JAM3 and promotes its expression at tight junctions and regulates its function in cell migration. Palmitoylates the glucose transporter GLUT4/SLC2A4 and controls the insulin-dependent translocation of GLUT4 to the plasma membrane. In brain, could also palmitoylate SNAP25 and DLG4/PSD95. Could also palmitoylate DNAJC5 and regulate its localization to the Golgi membrane. Could also palmitoylate NCDN. May play a role in follicle stimulation hormone (FSH) activation of testicular Sertoli cells. Activates pyroptosis by catalyzing palmitoylation of gasdermin-D (GSDMD). This Rattus norvegicus (Rat) protein is Palmitoyltransferase ZDHHC7.